The sequence spans 469 residues: Nuclear hormone receptor family member nhr-154 (469 aa).

The nuclear receptor DNA-binding region spans 80–159 (PSKCLVCRNP…VGMNPMAIQA (80 aa)). 2 NR C4-type zinc fingers span residues 83-103 (CLVC…CNGC) and 119-142 (CAKQ…CRAC). The 230-residue stretch at 230-459 (LDSKPVLVVT…KMGTTFRKCI (230 aa)) folds into the NR LBD domain.

It belongs to the nuclear hormone receptor family.

The protein resides in the nucleus. Its function is as follows. Orphan nuclear receptor. The protein is Nuclear hormone receptor family member nhr-154 (nhr-154) of Caenorhabditis elegans.